The sequence spans 347 residues: Selenide, water dikinase (347 aa).

C17 is a catalytic residue. Residues K20 and 48–50 (TRD) contribute to the ATP site. D51 is a Mg(2+) binding site. ATP-binding positions include D68, D91, and 139-141 (GHS). Residue D91 coordinates Mg(2+). Residue D227 participates in Mg(2+) binding.

Belongs to the selenophosphate synthase 1 family. Class I subfamily. As to quaternary structure, homodimer. Mg(2+) is required as a cofactor.

It carries out the reaction hydrogenselenide + ATP + H2O = selenophosphate + AMP + phosphate + 2 H(+). Functionally, synthesizes selenophosphate from selenide and ATP. The protein is Selenide, water dikinase of Cronobacter sakazakii (strain ATCC BAA-894) (Enterobacter sakazakii).